Reading from the N-terminus, the 680-residue chain is Pescadillo homolog (680 aa).

The disordered stretch occupies residues 315–336; it reads GEDEKPKAITNGEGESETPTDA. A BRCT domain is found at 359-471; sequence DPSQLFANCT…ELKEPNQYAP (113 aa). The disordered stretch occupies residues 494–680; the sequence is VPLEEQQTEA…ERKMAKGKAT (187 aa). Acidic residues-rich tracts occupy residues 511-530, 543-556, and 565-576; these read DVED…DDEA, GSDD…EEAD, and AEVDDASEDDEQ. Composition is skewed to basic and acidic residues over residues 597–610, 617–635, and 654–664; these read KASE…DPKS, RKEL…ERAK, and NKKDAESEKLR. Positions 609-680 form a coiled coil; that stretch reads KSKAKQQKRK…ERKMAKGKAT (72 aa). Basic residues predominate over residues 665 to 680; that stretch reads EKRRRIERKMAKGKAT.

The protein belongs to the pescadillo family. In terms of assembly, component of the NOP7 complex, composed of ERB1, NOP7 and YTM1. The complex is held together by ERB1, which interacts with NOP7 via its N-terminal domain and with YTM1 via a high-affinity interaction between the seven-bladed beta-propeller domains of the 2 proteins. The NOP7 complex associates with the 66S pre-ribosome.

It is found in the nucleus. The protein resides in the nucleolus. It localises to the nucleoplasm. Its function is as follows. Component of the NOP7 complex, which is required for maturation of the 25S and 5.8S ribosomal RNAs and formation of the 60S ribosome. This Pyricularia oryzae (strain 70-15 / ATCC MYA-4617 / FGSC 8958) (Rice blast fungus) protein is Pescadillo homolog.